A 412-amino-acid chain; its full sequence is Thyroxine-binding globulin (412 aa).

The first 16 residues, 1–16 (MPLFFSLVLLILGLHC), serve as a signal peptide directing secretion. 4 N-linked (GlcNAc...) asparagine glycosylation sites follow: Asn-35, Asn-98, Asn-164, and Asn-252. Residues Asn-292 and Lys-395 each contribute to the thyroxine site.

This sequence belongs to the serpin family. As to expression, expressed by the liver and secreted in plasma.

The protein resides in the secreted. Its function is as follows. Major thyroid hormone transport protein in serum. This is Thyroxine-binding globulin (SERPINA7) from Ovis aries (Sheep).